The following is a 135-amino-acid chain: Protein PilG (135 aa).

One can recognise a Response regulatory domain in the interval 9–125; the sequence is KVMVIDDSKT…ELLGAIKAHV (117 aa). Position 58 is a 4-aspartylphosphate (D58).

Phosphorylated.

Its function is as follows. Plays an essential role in both cAMP-dependent and independent regulation of twitching motility. Regulates the cAMP-independent coordination of type IV pilus (T4P) biogenesis and retraction that plays a role in surface and host cell adhesion, colonization, biofilm maturation, virulence, and twitching. In addition, phosphorylated PilG is necessary for cAMP production via regulation of the adenylate cyclase CyaB. Acts therefore as a response regulator of the chemosensory system/Chp system. In Pseudomonas aeruginosa (strain ATCC 15692 / DSM 22644 / CIP 104116 / JCM 14847 / LMG 12228 / 1C / PRS 101 / PAO1), this protein is Protein PilG (pilG).